Consider the following 917-residue polypeptide: Dolichyl-phosphooligosaccharide-protein glycotransferase (917 aa).

A compositionally biased stretch (basic and acidic residues) spans 1-10 (MTENNEKVKN). A disordered region spans residues 1-20 (MTENNEKVKNSDSANNQSSK). Over 1 to 38 (MTENNEKVKNSDSANNQSSKNSKFNFNFEDKKVKCAKT) the chain is Cytoplasmic. Over residues 11 to 20 (SDSANNQSSK) the composition is skewed to low complexity. A helical membrane pass occupies residues 39 to 59 (ILIIIFLAFLSFQMRAQTADM). Over 60 to 154 (GFTTNEQYLD…AMDSTVTLMN (95 aa)) the chain is Extracellular. A DXD motif 1 motif is present at residues 82-84 (ALD). Asp84 contacts Mn(2+). A helical membrane pass occupies residues 155-175 (AAFWVPAILSMFLITPIFFTV). Topologically, residues 176-182 (RRITSSD) are cytoplasmic. Residues 183–203 (IGGAVAAILASLSPSIFVKTV) form a helical membrane-spanning segment. Topologically, residues 204–209 (AGFSDT) are extracellular. Asp208 lines the Mn(2+) pocket. A DXD motif 2 motif is present at residues 208–210 (DTP). A helical transmembrane segment spans residues 210 to 230 (PILEILPLLFIVWFIIEAIHY). Residues 231-237 (SKEKNYK) lie on the Cytoplasmic side of the membrane. Residues 238–260 (SLIYGLLATLMLALYPFMWSAWW) traverse the membrane as a helical segment. Residues 261–263 (YGY) lie on the Extracellular side of the membrane. Residues 264-286 (YIVIAFLVIYAIYKGISYNSIAK) traverse the membrane as a helical segment. Residues 287 to 308 (YTKSKNNNHKDKIESEKLEMLN) are Cytoplasmic-facing. Residues 309 to 329 (ILKISGLFIIGGAVLITALYG) traverse the membrane as a helical segment. The Extracellular segment spans residues 330-372 (VSTTMNALQAPLNYLGLDEVSSQTGWPNVLTTVSELDTASLDE). A TIXE motif motif is present at residues 361-364 (TVSE). Glu364 provides a ligand contact to Mn(2+). The helical transmembrane segment at 373 to 393 (IISSSLGSIHLFAIGLIGIFL) threads the bilayer. Over 394–413 (SLFRKVLTPVKQISNGLAEK) the chain is Cytoplasmic. A helical membrane pass occupies residues 414–434 (LDIKYALLLIIWFAVTFLAAS). The Extracellular segment spans residues 435–438 (KGVR). Arg438 lines the a glycophospholipid pocket. A helical membrane pass occupies residues 439–459 (FVALMVPPLSIGVGIFVGFIE). At 460-469 (QFIKNNLDKK) the chain is on the cytoplasmic side. Residues 470–490 (YEYVAYPTIAIIVLYALFTIY) form a helical membrane-spanning segment. At 491 to 506 (RADSADLVRMLLPSNY) the chain is on the extracellular side. A helical transmembrane segment spans residues 507-527 (VPIAEGIMLASLAVLIIYKVA). Over 528–541 (ELIAESNKKLVMNK) the chain is Cytoplasmic. The chain crosses the membrane as a helical span at residues 542–562 (IFMILLAIGLITPTIATIVPF). The Extracellular segment spans residues 563 to 917 (YSVPTYNDGW…FSVDYGNYSK (355 aa)). Residues 592 to 594 (WWD) are interacts with target acceptor peptide in protein substrate. The WWDYG motif motif lies at 592–596 (WWDNG). An MI motif motif is present at residues 719 to 726 (MTSIASVW).

It belongs to the STT3 family. Mn(2+) serves as cofactor. It depends on Mg(2+) as a cofactor.

The protein localises to the cell membrane. The enzyme catalyses an archaeal dolichyl phosphooligosaccharide + [protein]-L-asparagine = an archaeal dolichyl phosphate + a glycoprotein with the oligosaccharide chain attached by N-beta-D-glycosyl linkage to a protein L-asparagine.. It participates in cell surface structure biogenesis; S-layer biogenesis. The protein operates within protein modification; protein glycosylation. Its function is as follows. Oligosaccharyl transferase (OST) that catalyzes the initial transfer of a defined glycan (ManNAcGlc-2,3-diNAcAGlcNAc in M.voltae) from the lipid carrier dolichol-monophosphate to an asparagine residue within an Asn-X-Ser/Thr consensus motif in nascent polypeptide chains, the first step in protein N-glycosylation. Involved in the assembly of an N-linked disaccharide that decorates the S-layer glycoprotein and flagellins. This chain is Dolichyl-phosphooligosaccharide-protein glycotransferase, found in Methanococcus voltae.